The sequence spans 332 residues: Ferredoxin--NADP reductase 2 (332 aa).

The FAD site is built by E37, Q45, Y50, V90, F124, D285, and T326.

The protein belongs to the ferredoxin--NADP reductase type 2 family. In terms of assembly, homodimer. It depends on FAD as a cofactor.

The catalysed reaction is 2 reduced [2Fe-2S]-[ferredoxin] + NADP(+) + H(+) = 2 oxidized [2Fe-2S]-[ferredoxin] + NADPH. The protein is Ferredoxin--NADP reductase 2 of Bacillus pumilus (strain SAFR-032).